The sequence spans 298 residues: Diphthine methyl ester synthase (298 aa).

S-adenosyl-L-methionine contacts are provided by residues Leu9, Asp85, Gly88, 113-114, Leu164, Leu222, and His247; that span reads SV.

Belongs to the diphthine synthase family.

It localises to the cytoplasm. It catalyses the reaction 2-[(3S)-amino-3-carboxypropyl]-L-histidyl-[translation elongation factor 2] + 4 S-adenosyl-L-methionine = diphthine methyl ester-[translation elongation factor 2] + 4 S-adenosyl-L-homocysteine + 3 H(+). Its pathway is protein modification; peptidyl-diphthamide biosynthesis. Functionally, S-adenosyl-L-methionine-dependent methyltransferase that catalyzes four methylations of the modified target histidine residue in translation elongation factor 2 (EF-2), to form an intermediate called diphthine methyl ester. The four successive methylation reactions represent the second step of diphthamide biosynthesis. This Eremothecium gossypii (strain ATCC 10895 / CBS 109.51 / FGSC 9923 / NRRL Y-1056) (Yeast) protein is Diphthine methyl ester synthase (DPH5).